The following is a 563-amino-acid chain: Methylcrotonoyl-CoA carboxylase beta chain, mitochondrial (563 aa).

The N-terminal 22 residues, 1-22 (MWGALRSVLRPCSRASVPRQRA), are a transit peptide targeting the mitochondrion. The CoA carboxyltransferase N-terminal domain occupies 49-306 (MKALVNQLHE…QKKLDVTVEP (258 aa)). The carboxyltransferase stretch occupies residues 49 to 555 (MKALVNQLHE…SAALNAPIQR (507 aa)). The residue at position 70 (Lys-70) is an N6-acetyllysine; alternate. Lys-70 is subject to N6-succinyllysine; alternate. Position 141 is an N6-succinyllysine (Lys-141). In terms of domain architecture, CoA carboxyltransferase C-terminal spans 309–555 (EPLFPADELY…SAALNAPIQR (247 aa)). The interval 343 to 372 (RFNEFKALYGDTLVTGFARIFGYPVGIIGN) is acyl-CoA binding. An N6-succinyllysine modification is found at Lys-433. An N6-acetyllysine; alternate modification is found at Lys-495. Residue Lys-495 is modified to N6-succinyllysine; alternate. Lys-511 carries the N6-acetyllysine modification.

The protein belongs to the AccD/PCCB family. In terms of assembly, probably a dodecamer composed of six biotin-containing alpha subunits (MCCC1) and six beta (MCCC2) subunits.

The protein localises to the mitochondrion matrix. It carries out the reaction 3-methylbut-2-enoyl-CoA + hydrogencarbonate + ATP = 3-methyl-(2E)-glutaconyl-CoA + ADP + phosphate + H(+). Its pathway is amino-acid degradation; L-leucine degradation; (S)-3-hydroxy-3-methylglutaryl-CoA from 3-isovaleryl-CoA: step 2/3. Functionally, carboxyltransferase subunit of the 3-methylcrotonyl-CoA carboxylase, an enzyme that catalyzes the conversion of 3-methylcrotonyl-CoA to 3-methylglutaconyl-CoA, a critical step for leucine and isovaleric acid catabolism. The sequence is that of Methylcrotonoyl-CoA carboxylase beta chain, mitochondrial (Mccc2) from Rattus norvegicus (Rat).